A 314-amino-acid chain; its full sequence is DNA-directed RNA polymerase subunit alpha (314 aa).

An alpha N-terminal domain (alpha-NTD) region spans residues 1 to 227; sequence MTYFQIECVE…SLFYPLTNLN (227 aa). An alpha C-terminal domain (alpha-CTD) region spans residues 239 to 314; it reads EEEINQVLIE…LPKEKNIQNT (76 aa).

Belongs to the RNA polymerase alpha chain family. In plastids the minimal PEP RNA polymerase catalytic core is composed of four subunits: alpha, beta, beta', and beta''. When a (nuclear-encoded) sigma factor is associated with the core the holoenzyme is formed, which can initiate transcription.

It is found in the plastid. The protein localises to the chloroplast. The catalysed reaction is RNA(n) + a ribonucleoside 5'-triphosphate = RNA(n+1) + diphosphate. Its function is as follows. DNA-dependent RNA polymerase catalyzes the transcription of DNA into RNA using the four ribonucleoside triphosphates as substrates. The chain is DNA-directed RNA polymerase subunit alpha from Gracilaria tenuistipitata var. liui (Red alga).